Here is a 418-residue protein sequence, read N- to C-terminus: UDP-N-acetylglucosamine 1-carboxyvinyltransferase (418 aa).

Phosphoenolpyruvate is bound at residue 22 to 23; that stretch reads KN. Residue R91 coordinates UDP-N-acetyl-alpha-D-glucosamine. C115 functions as the Proton donor in the catalytic mechanism. 2-(S-cysteinyl)pyruvic acid O-phosphothioketal is present on C115. Residues 120–124, 160–163, D305, and I327 contribute to the UDP-N-acetyl-alpha-D-glucosamine site; these read RPVDL and KVSV.

Belongs to the EPSP synthase family. MurA subfamily.

Its subcellular location is the cytoplasm. It carries out the reaction phosphoenolpyruvate + UDP-N-acetyl-alpha-D-glucosamine = UDP-N-acetyl-3-O-(1-carboxyvinyl)-alpha-D-glucosamine + phosphate. It functions in the pathway cell wall biogenesis; peptidoglycan biosynthesis. In terms of biological role, cell wall formation. Adds enolpyruvyl to UDP-N-acetylglucosamine. The polypeptide is UDP-N-acetylglucosamine 1-carboxyvinyltransferase (Baumannia cicadellinicola subsp. Homalodisca coagulata).